A 749-amino-acid chain; its full sequence is Protein kinase domain-containing protein ppk32 (749 aa).

Positions 21–317 (IQKENSVQVG…MFELERSPYF (297 aa)) constitute a Protein kinase domain. Disordered regions lie at residues 598–677 (KKLQ…VTAK) and 706–749 (PLIP…KSLL). The span at 602 to 651 (SKPSSVVPNRITTDPFSSQTKEATSKPSSISPNKATTNIFTSQASLSSQG) shows a compositional bias: polar residues. Ser632 carries the post-translational modification Phosphoserine. Composition is skewed to low complexity over residues 657-670 (SSAS…QRAS) and 721-735 (NRRV…NTVT).

It localises to the cytoplasm. The chain is Protein kinase domain-containing protein ppk32 (ppk32) from Schizosaccharomyces pombe (strain 972 / ATCC 24843) (Fission yeast).